We begin with the raw amino-acid sequence, 448 residues long: Ribosome biogenesis protein YTM1 (448 aa).

The interval 5-86 (TSNQAVVFST…EETLEIEYIE (82 aa)) is ubiquitin-like (UBL) domain. WD repeat units lie at residues 98-136 (PHES…TLDA), 191-230 (LHTA…KHEV), 271-309 (SHIG…CTRT), 312-351 (ASEK…ALSA), 357-397 (LHPA…AAIS), and 403-439 (DGTK…ETQG). Residues 225–261 (PPKHEVPEPTITAADQRTKKRRKVDPSSGDSSSPTAI) form a disordered region.

It belongs to the WD repeat WDR12/YTM1 family. Component of the NOP7 complex, composed of ERB1, NOP7 and YTM1. The complex is held together by ERB1, which interacts with NOP7 via its N-terminal domain and with YTM1 via a high-affinity interaction between the seven-bladed beta-propeller domains of the 2 proteins. The NOP7 complex associates with the 66S pre-ribosome. Interacts (via UBL domain) with MDN1 (via VWFA/MIDAS domain).

It is found in the nucleus. It localises to the nucleolus. The protein localises to the nucleoplasm. Functionally, component of the NOP7 complex, which is required for maturation of the 25S and 5.8S ribosomal RNAs and formation of the 60S ribosome. In Coprinopsis cinerea (strain Okayama-7 / 130 / ATCC MYA-4618 / FGSC 9003) (Inky cap fungus), this protein is Ribosome biogenesis protein YTM1.